Reading from the N-terminus, the 180-residue chain is ATP-dependent protease subunit HslV (180 aa).

Residue threonine 5 is part of the active site. 3 residues coordinate Na(+): glycine 165, cysteine 168, and threonine 171.

It belongs to the peptidase T1B family. HslV subfamily. As to quaternary structure, a double ring-shaped homohexamer of HslV is capped on each side by a ring-shaped HslU homohexamer. The assembly of the HslU/HslV complex is dependent on binding of ATP.

It is found in the cytoplasm. It catalyses the reaction ATP-dependent cleavage of peptide bonds with broad specificity.. Allosterically activated by HslU binding. In terms of biological role, protease subunit of a proteasome-like degradation complex believed to be a general protein degrading machinery. This Helicobacter pylori (strain J99 / ATCC 700824) (Campylobacter pylori J99) protein is ATP-dependent protease subunit HslV.